A 477-amino-acid chain; its full sequence is UDP-N-acetylmuramate--L-alanine ligase (477 aa).

An ATP-binding site is contributed by 122 to 128 (GTHGKTT).

It belongs to the MurCDEF family.

Its subcellular location is the cytoplasm. The enzyme catalyses UDP-N-acetyl-alpha-D-muramate + L-alanine + ATP = UDP-N-acetyl-alpha-D-muramoyl-L-alanine + ADP + phosphate + H(+). It participates in cell wall biogenesis; peptidoglycan biosynthesis. Its function is as follows. Cell wall formation. The protein is UDP-N-acetylmuramate--L-alanine ligase of Xylella fastidiosa (strain M23).